The following is a 387-amino-acid chain: S-adenosylmethionine synthase (387 aa).

His-19 is a binding site for ATP. Position 21 (Asp-21) interacts with Mg(2+). Residue Glu-47 coordinates K(+). Gln-103 contacts L-methionine. The segment at 103-113 is flexible loop; that stretch reads QSPDIAQGVEL. Residues 167-169, 233-234, Asp-242, 248-249, Ala-265, and Lys-269 each bind ATP; these read DMK, RF, and RK. An L-methionine-binding site is contributed by Asp-242. Residue Lys-273 coordinates L-methionine.

It belongs to the AdoMet synthase family. In terms of assembly, homotetramer; dimer of dimers. It depends on Mg(2+) as a cofactor. Requires K(+) as cofactor.

Its subcellular location is the cytoplasm. It carries out the reaction L-methionine + ATP + H2O = S-adenosyl-L-methionine + phosphate + diphosphate. The protein operates within amino-acid biosynthesis; S-adenosyl-L-methionine biosynthesis; S-adenosyl-L-methionine from L-methionine: step 1/1. Catalyzes the formation of S-adenosylmethionine (AdoMet) from methionine and ATP. The overall synthetic reaction is composed of two sequential steps, AdoMet formation and the subsequent tripolyphosphate hydrolysis which occurs prior to release of AdoMet from the enzyme. In Mycoplasma mycoides subsp. mycoides SC (strain CCUG 32753 / NCTC 10114 / PG1), this protein is S-adenosylmethionine synthase.